The sequence spans 221 residues: Serine/arginine-rich splicing factor 2 (221 aa).

Ser2 carries the N-acetylserine modification. The residue at position 2 (Ser2) is a Phosphoserine. Residues 14–92 form the RRM domain; sequence TSLKVDNLTY…RELRVQMARY (79 aa). Residues Thr22 and Thr25 each carry the phosphothreonine modification. A Phosphoserine modification is found at Ser26. At Lys52 the chain carries N6-acetyllysine. The interval 92-221 is disordered; that stretch reads YGRPPDSHHS…SPEEEGAVSS (130 aa). Basic residues-rich tracts occupy residues 117–171 and 179–189; these read RRSR…RSKS and SRSRSRSRSRS. 7 positions are modified to phosphoserine: Ser189, Ser191, Ser204, Ser206, Ser208, Ser212, and Ser220. Over residues 212 to 221 the composition is skewed to acidic residues; the sequence is SPEEEGAVSS.

The protein belongs to the splicing factor SR family. In terms of assembly, in vitro, self-associates and binds SRSF1/SFRS1 (ASF/SF2), SNRP70 and U2AF1 but not U2AF2. Binds SREK1/SFRS12. Interacts with CCNL1 and CCNL2. Interacts with SCAF11. Interacts with ZRSR2/U2AF1-RS2. Interacts with CCDC55 (via C-terminus). Interacts with BRDT. In terms of processing, extensively phosphorylated on serine residues in the RS domain. Phosphorylated by SRPK2 and this causes its redistribution from the nuclear speckle to nucleoplasm and controls cell fate decision in response to cisplatin treatment. KAT5/TIP60 inhibits its phosphorylation by preventing SRPK2 nuclear translocation. Acetylation on Lys-52 by KAT5/TIP60 promotes its proteasomal degradation. This effect is counterbalanced by HDAC6, which positively controls SRSF2 protein level by deacetylating it and preventing its proteasomal degradation.

The protein resides in the nucleus. It is found in the nucleoplasm. It localises to the nucleus speckle. Functionally, necessary for the splicing of pre-mRNA. It is required for formation of the earliest ATP-dependent splicing complex and interacts with spliceosomal components bound to both the 5'- and 3'-splice sites during spliceosome assembly. It also is required for ATP-dependent interactions of both U1 and U2 snRNPs with pre-mRNA. Interacts with other spliceosomal components, via the RS domains, to form a bridge between the 5'- and 3'-splice site binding components, U1 snRNP and U2AF. Binds to purine-rich RNA sequences, either 5'-AGSAGAGTA-3' (S=C or G) or 5'-GTTCGAGTA-3'. Can bind to beta-globin mRNA and commit it to the splicing pathway. The phosphorylated form (by SRPK2) is required for cellular apoptosis in response to cisplatin treatment. The chain is Serine/arginine-rich splicing factor 2 (SRSF2) from Pan troglodytes (Chimpanzee).